Here is a 140-residue protein sequence, read N- to C-terminus: ATP synthase epsilon chain 1 (140 aa).

This sequence belongs to the ATPase epsilon chain family. In terms of assembly, F-type ATPases have 2 components, CF(1) - the catalytic core - and CF(0) - the membrane proton channel. CF(1) has five subunits: alpha(3), beta(3), gamma(1), delta(1), epsilon(1). CF(0) has three main subunits: a, b and c.

It is found in the cell inner membrane. Functionally, produces ATP from ADP in the presence of a proton gradient across the membrane. The polypeptide is ATP synthase epsilon chain 1 (Photobacterium profundum (strain SS9)).